The following is a 297-amino-acid chain: uncharacterized protein (297 aa).

The next 4 membrane-spanning stretches (helical) occupy residues 3–23 (DYIY…LYML), 38–58 (VIHI…MPAL), 103–123 (IEGI…TALL), and 128–148 (YVFL…LLAM).

Its subcellular location is the cell membrane. This is an uncharacterized protein from Bacillus subtilis (strain 168).